Consider the following 604-residue polypeptide: Elongation factor 4 (604 aa).

Residues 10 to 191 (KNIRNFSIIA…KIITTIPAPS (182 aa)) enclose the tr-type G domain. GTP is bound by residues 22–27 (DHGKST) and 138–141 (NKID).

This sequence belongs to the TRAFAC class translation factor GTPase superfamily. Classic translation factor GTPase family. LepA subfamily.

The protein resides in the cell inner membrane. It carries out the reaction GTP + H2O = GDP + phosphate + H(+). Required for accurate and efficient protein synthesis under certain stress conditions. May act as a fidelity factor of the translation reaction, by catalyzing a one-codon backward translocation of tRNAs on improperly translocated ribosomes. Back-translocation proceeds from a post-translocation (POST) complex to a pre-translocation (PRE) complex, thus giving elongation factor G a second chance to translocate the tRNAs correctly. Binds to ribosomes in a GTP-dependent manner. This chain is Elongation factor 4, found in Helicobacter acinonychis (strain Sheeba).